A 332-amino-acid chain; its full sequence is NADH-quinone oxidoreductase subunit H (332 aa).

9 helical membrane-spanning segments follow: residues 4 to 24 (FAFF…IFAS), 44 to 64 (IGPD…MIKL), 78 to 98 (FIFA…LAAI), 120 to 140 (VALL…FLGG), 165 to 185 (VGAL…LVDI), 194 to 214 (FSWL…ALFI), 255 to 275 (IAGA…FWII), 279 to 299 (IMMI…RAAF), and 312 to 332 (YLIL…AVLL).

This sequence belongs to the complex I subunit 1 family. In terms of assembly, NDH-1 is composed of 14 different subunits. Subunits NuoA, H, J, K, L, M, N constitute the membrane sector of the complex.

The protein resides in the cell inner membrane. The enzyme catalyses a quinone + NADH + 5 H(+)(in) = a quinol + NAD(+) + 4 H(+)(out). Its function is as follows. NDH-1 shuttles electrons from NADH, via FMN and iron-sulfur (Fe-S) centers, to quinones in the respiratory chain. The immediate electron acceptor for the enzyme in this species is believed to be ubiquinone. Couples the redox reaction to proton translocation (for every two electrons transferred, four hydrogen ions are translocated across the cytoplasmic membrane), and thus conserves the redox energy in a proton gradient. This subunit may bind ubiquinone. This Campylobacter jejuni subsp. jejuni serotype O:6 (strain 81116 / NCTC 11828) protein is NADH-quinone oxidoreductase subunit H.